Here is a 715-residue protein sequence, read N- to C-terminus: Solute carrier organic anion transporter family member 1C1 (715 aa).

Over 1-43 the chain is Cytoplasmic; sequence MDTSSKENAHLFHKNSAQPAGGPSFTVGYPSTEEARPCCGKLK. Residues 44–63 form a helical membrane-spanning segment; the sequence is VFLGALSFVYFAKALAEGYL. Residues 64 to 82 lie on the Extracellular side of the membrane; it reads KSTVTQIERRFEIPSSLVG. The helical transmembrane segment at 83–103 threads the bilayer; the sequence is IIDGSFEIGNLLVITFVSYFG. Topologically, residues 104-109 are cytoplasmic; it reads AKLHRP. Residues 110–134 traverse the membrane as a helical segment; that stretch reads KIIGAGCLVMGFGTMLIAVPQFFME. At 135–187 the chain is on the extracellular side; that stretch reads KYSYEKYERYSPSSNVTPSISPCYLESSSPSPSSILGKSQNKISHECVGDSSS. The helical transmembrane segment at 188–216 threads the bilayer; the sequence is SMWVYVFLGNLLRGLGETPIQPLGIAYLD. At 217 to 235 the chain is on the cytoplasmic side; that stretch reads DFASEDNAAFYIGCVQTVA. Residues 236–256 form a helical membrane-spanning segment; it reads IIGPIFGFLLGSLCAKLYVDI. The Extracellular segment spans residues 257 to 274; that stretch reads GFVNLDHITITPKDPQWV. The helical transmembrane segment at 275 to 299 threads the bilayer; it reads GAWWLGYLIAGFLSLLAAVPFWCLP. Residues 300–351 lie on the Cytoplasmic side of the membrane; that stretch reads KTLPRSQSRENSGSTSEKSKFIDDPIHYQMAPGDDKMKIMEMAKDFLPSLKT. The helical transmembrane segment at 352-373 threads the bilayer; that stretch reads LFRNPVYILYLCASTVQFNSLF. At 374-393 the chain is on the extracellular side; sequence GMVTYKPKYIEQQYGQSSSK. Residues 394-417 traverse the membrane as a helical segment; the sequence is ANFVIGLINIPAVALGIFSGGIVM. At 418–421 the chain is on the cytoplasmic side; that stretch reads KKFR. The chain crosses the membrane as a helical span at residues 422–445; sequence LGICEATKLYLGSSVFGYLLFLSL. Over 446-557 the chain is Extracellular; it reads FALGCENSSV…NGCSQMFLYF (112 aa). N-linked (GlcNAc...) asparagine glycosylation is present at asparagine 452. Residues 473-528 form the Kazal-like domain; the sequence is RALFSDCNSRCKCSDSKWEPMCGDNGITYVSACLAGCQSSSRSGKNIIFSNCTCVG. Intrachain disulfides connect cysteine 479–cysteine 509, cysteine 485–cysteine 505, and cysteine 494–cysteine 526. N-linked (GlcNAc...) asparagine glycans are attached at residues asparagine 523 and asparagine 536. A helical membrane pass occupies residues 558–580; sequence LVISVITSYTLSLGGIPGYILLL. Residues 581–589 lie on the Cytoplasmic side of the membrane; sequence RCIQPQLKS. The helical transmembrane segment at 590 to 615 threads the bilayer; it reads FALGIYTLAVRVLAGIPAPVYFGVLI. At 616–649 the chain is on the extracellular side; it reads DTSCLKWGFKKCGSRGSCRLYDSHAFRHIYLGLT. The chain crosses the membrane as a helical span at residues 650 to 667; that stretch reads TLLGTVSVFLSMAVLFVL. The Cytoplasmic segment spans residues 668-715; the sequence is KKKYVSKHSSLITTREKIGMSSSIKKETCAARDRGLQPKYWPGKETRL.

The protein belongs to the organo anion transporter (TC 2.A.60) family. Widely expressed throughout the brain except in the cerebellum. Not detected in kidney, heart, lung, skeletal muscle, spleen, liver, nor testis. Highly expressed in cerebral microvessels throughout the brain and in the choroid plexus (at mRNA and protein level).

It localises to the cell membrane. The enzyme catalyses 3,3',5'-triiodo-L-thyronine(out) = 3,3',5'-triiodo-L-thyronine(in). It carries out the reaction L-thyroxine(out) = L-thyroxine(in). The catalysed reaction is L-thyroxine sulfate(out) = L-thyroxine sulfate(in). It catalyses the reaction 17beta-estradiol 17-O-(beta-D-glucuronate)(out) = 17beta-estradiol 17-O-(beta-D-glucuronate)(in). The enzyme catalyses 3,3',5-triiodo-L-thyronine(out) = 3,3',5-triiodo-L-thyronine(in). Mediates the Na(+)-independent high affinity transport of thyroid hormones at the plasma membrane of brain capillary endothelial cells. The transport activity of substrates L-thyroxine (T4) and 3,3',5'-triiodo-L-thyronine (reverse T3, rT3) is much greater than that of 3,3',5-triiodo-L-thyronine (T3). The prehormone, T4, is the major form in the circulating blood and is converted to the active form, T3, by the iodothyronine-deiodinase in peripheral organs. T3 plays an essential role in brain development via binding to specific nuclear receptors (thyroid hormone receptor). Also transports organic anions such as the conjugated steroid 17-beta-glucuronosyl estradiol (17beta-estradiol 17-O-(beta-D-glucuronate)). Transports T4 and estrone-3-sulfate in a pH-insensitive manner. May serve as a drug efflux system at the blood brain barrier. This chain is Solute carrier organic anion transporter family member 1C1 (Slco1c1), found in Mus musculus (Mouse).